A 146-amino-acid chain; its full sequence is Ribonuclease H (146 aa).

Residues 1 to 143 enclose the RNase H type-1 domain; that stretch reads MQKKVTIYTD…CDYLATQAIK (143 aa). Aspartate 10, glutamate 48, aspartate 70, and aspartate 135 together coordinate Mg(2+).

The protein belongs to the RNase H family. In terms of assembly, monomer. Requires Mg(2+) as cofactor.

The protein resides in the cytoplasm. The enzyme catalyses Endonucleolytic cleavage to 5'-phosphomonoester.. Its function is as follows. Endonuclease that specifically degrades the RNA of RNA-DNA hybrids. The polypeptide is Ribonuclease H (Chlorobium phaeobacteroides (strain BS1)).